Consider the following 252-residue polypeptide: Zinc finger CCCH domain-containing protein 28 (252 aa).

Positions 1–21 (MSHRRDYGSDAVHVRITHDPP) are enriched in basic and acidic residues. Positions 1-31 (MSHRRDYGSDAVHVRITHDPPPENCFPNSGD) are disordered. 2 C3H1-type zinc fingers span residues 71–99 (FFKTKLCFKFRAGTCPYSASSCHFAHSAE) and 143–171 (NWKTRICNKWQTTGYCPFGSHCHFAHGPS).

The polypeptide is Zinc finger CCCH domain-containing protein 28 (Arabidopsis thaliana (Mouse-ear cress)).